Consider the following 148-residue polypeptide: UPAR/Ly6 domain-containing protein bero (148 aa).

Residues 1–23 (MVSALKCSLAVAVMISLACSAYA) form the signal peptide. 5 disulfide bridges follow: C26–C72, C29–C37, C51–C90, C102–C116, and C119–C124. A glycan (N-linked (GlcNAc...) asparagine) is linked at N68. N-linked (GlcNAc...) asparagine glycosylation occurs at N125. The GPI-anchor amidated asparagine moiety is linked to residue N125. Positions 126 to 148 (GSSSLAPIAGAILLFFGVARLLA) are cleaved as a propeptide — removed in mature form. The chain crosses the membrane as a helical span at residues 128–148 (SSLAPIAGAILLFFGVARLLA).

Belongs to the quiver family.

The protein localises to the cell membrane. It is found in the membrane. Its subcellular location is the perikaryon. It localises to the cell projection. The protein resides in the neuron projection. Functionally, necessary for the maintenance of persistent fluctuating activities and suppression of acute evoked activities in abdominal leucokinin-producing (ABLK) neurons to negatively regulate neuron excitability involved in nociceptive (perception of pain) behavioral responses. The polypeptide is UPAR/Ly6 domain-containing protein bero (Drosophila melanogaster (Fruit fly)).